Reading from the N-terminus, the 558-residue chain is Protein OS-9 homolog (558 aa).

The first 17 residues, 1–17, serve as a signal peptide directing secretion; it reads MLLKSLALIASSSLAAT. A glycan (N-linked (GlcNAc...) asparagine) is linked at Asn-68. The 127-residue stretch at 111–237 folds into the MRH domain; the sequence is GDCLFYEQGF…QVGTPRLCKD (127 aa). Cysteines 113 and 126 form a disulfide. A mannooligosaccharide derivative is bound by residues Gln-133, Arg-197, Glu-219, and Tyr-225. Cystine bridges form between Cys-190–Cys-223 and Cys-205–Cys-235. 2 disordered regions span residues 435-508 and 539-558; these read SKKL…DEDE and KDLADKEDDDDDYEDYGLSD. Basic and acidic residues predominate over residues 441-466; it reads KKEAASTKREEAKKQVEASVEEKAVD. Polar residues predominate over residues 474–492; that stretch reads DTVTSTQTFFRTQTLSTAE. The span at 543–558 shows a compositional bias: acidic residues; it reads DKEDDDDDYEDYGLSD.

This sequence belongs to the OS-9 family. In terms of assembly, interacts with missfolded ER lumenal proteins.

It is found in the endoplasmic reticulum membrane. Functionally, lectin involved in the quality control of the secretory pathway. As a member of the endoplasmic reticulum-associated degradation lumenal (ERAD-L) surveillance system, targets misfolded endoplasmic reticulum lumenal glycoproteins for degradation. This Yarrowia lipolytica (strain CLIB 122 / E 150) (Yeast) protein is Protein OS-9 homolog (YOS9).